We begin with the raw amino-acid sequence, 203 residues long: Probable GTP-binding protein EngB (203 aa).

An EngB-type G domain is found at 22–195; it reads GIPEIALAGR…WEEIVNQYNQ (174 aa). Residues 30-37, 57-61, 75-78, 142-145, and 174-176 each bind GTP; these read GRSNVGKS, GKTRT, DLPG, TKAD, and VSS. Mg(2+)-binding residues include Ser37 and Thr59.

It belongs to the TRAFAC class TrmE-Era-EngA-EngB-Septin-like GTPase superfamily. EngB GTPase family. Requires Mg(2+) as cofactor.

In terms of biological role, necessary for normal cell division and for the maintenance of normal septation. This chain is Probable GTP-binding protein EngB, found in Clostridioides difficile (strain 630) (Peptoclostridium difficile).